The chain runs to 735 residues: Muskelin (735 aa).

Position 2 is an N-acetylalanine (alanine 2). The region spanning 172-204 (REQEAIRLCLKHFRQHNYTEAFESLQKKTKIAL) is the LisH domain. Residues 206–258 (HPMLTDMHDKLVLKGDFDACEELIEKAVNDGLFNQYISQQEYKPRWSQIIPKS) form the CTLH domain. Kelch repeat units follow at residues 284-330 (TVYL…SCHK), 339-391 (QIYT…FDHQ), 400-458 (MIYT…SRIG), 469-515 (CLYV…TGFT), 526-578 (EIHV…SLQE), and 597-651 (VHYL…AQMD). The interval 701–735 (DHTYAQRTQLFDTLVNFFPDSMTPPKGNLVDLITL) is important for location in the cytosol.

Homodimer; may form higher oligomers. Identified in the CTLH complex that contains GID4, RANBP9 and/or RANBP10, MKLN1, MAEA, RMND5A (or alternatively its paralog RMND5B), GID8, ARMC8, WDR26 and YPEL5. Within this complex, MAEA, RMND5A (or alternatively its paralog RMND5B), GID8, WDR26, and RANBP9 and/or RANBP10 form the catalytic core, while GID4, MKLN1, ARMC8 and YPEL5 have ancillary roles. Interacts with RANBP9. Part of a complex consisting of RANBP9, MKLN1 and GID8. Interacts with GABRA1. Interacts with the C-terminal tail of PTGER3. As to expression, detected in brain, especially in hippocampus and cerebellum (at protein level).

Its subcellular location is the cytoplasm. It localises to the cytosol. The protein localises to the nucleus. The protein resides in the nucleoplasm. It is found in the cell projection. Its subcellular location is the ruffle. It localises to the cell cortex. The protein localises to the synapse. The protein resides in the postsynapse. In terms of biological role, component of the CTLH E3 ubiquitin-protein ligase complex that selectively accepts ubiquitin from UBE2H and mediates ubiquitination and subsequent proteasomal degradation of the transcription factor HBP1. Required for internalization of the GABA receptor GABRA1 from the cell membrane via endosomes and subsequent GABRA1 degradation. Acts as a mediator of cell spreading and cytoskeletal responses to the extracellular matrix component THBS1. This chain is Muskelin (Mkln1), found in Mus musculus (Mouse).